We begin with the raw amino-acid sequence, 227 residues long: Small ribosomal subunit protein uS3 (227 aa).

The KH type-2 domain maps to 39 to 107 (VREFLMKKLE…PVHINIEEIR (69 aa)).

The protein belongs to the universal ribosomal protein uS3 family. In terms of assembly, part of the 30S ribosomal subunit. Forms a tight complex with proteins S10 and S14.

Its function is as follows. Binds the lower part of the 30S subunit head. Binds mRNA in the 70S ribosome, positioning it for translation. The polypeptide is Small ribosomal subunit protein uS3 (Hahella chejuensis (strain KCTC 2396)).